The sequence spans 165 residues: UPF0114 protein in repA1-repA2 intergenic region (165 aa).

3 helical membrane passes run 10–32, 53–75, and 134–156; these read YASR…LLTL, LVLV…MVMF, and DQIM…MACI.

It belongs to the UPF0114 family.

The protein resides in the cell membrane. The polypeptide is UPF0114 protein in repA1-repA2 intergenic region (Buchnera aphidicola subsp. Baizongia pistaciae (strain Bp)).